The sequence spans 209 residues: Small ribosomal subunit protein uS4 (209 aa).

Residues 98–161 form the S4 RNA-binding domain; it reads TRLDNVVYRM…AKQLRVQEAL (64 aa).

Belongs to the universal ribosomal protein uS4 family. In terms of assembly, part of the 30S ribosomal subunit. Contacts protein S5. The interaction surface between S4 and S5 is involved in control of translational fidelity.

Functionally, one of the primary rRNA binding proteins, it binds directly to 16S rRNA where it nucleates assembly of the body of the 30S subunit. In terms of biological role, with S5 and S12 plays an important role in translational accuracy. The polypeptide is Small ribosomal subunit protein uS4 (Stenotrophomonas maltophilia (strain R551-3)).